We begin with the raw amino-acid sequence, 208 residues long: High frequency lysogenization protein HflD homolog (208 aa).

Belongs to the HflD family.

The protein localises to the cytoplasm. The protein resides in the cell inner membrane. The polypeptide is High frequency lysogenization protein HflD homolog (Yersinia enterocolitica serotype O:8 / biotype 1B (strain NCTC 13174 / 8081)).